The chain runs to 573 residues: Proline--tRNA ligase (573 aa).

This sequence belongs to the class-II aminoacyl-tRNA synthetase family. ProS type 1 subfamily. As to quaternary structure, homodimer.

The protein resides in the cytoplasm. The enzyme catalyses tRNA(Pro) + L-proline + ATP = L-prolyl-tRNA(Pro) + AMP + diphosphate. Catalyzes the attachment of proline to tRNA(Pro) in a two-step reaction: proline is first activated by ATP to form Pro-AMP and then transferred to the acceptor end of tRNA(Pro). As ProRS can inadvertently accommodate and process non-cognate amino acids such as alanine and cysteine, to avoid such errors it has two additional distinct editing activities against alanine. One activity is designated as 'pretransfer' editing and involves the tRNA(Pro)-independent hydrolysis of activated Ala-AMP. The other activity is designated 'posttransfer' editing and involves deacylation of mischarged Ala-tRNA(Pro). The misacylated Cys-tRNA(Pro) is not edited by ProRS. This is Proline--tRNA ligase from Methylobacillus flagellatus (strain ATCC 51484 / DSM 6875 / VKM B-1610 / KT).